We begin with the raw amino-acid sequence, 213 residues long: Putative manganese efflux pump MntP (213 aa).

The next 6 membrane-spanning stretches (helical) occupy residues 3-23, 36-56, 67-87, 130-150, 152-172, and 187-207; these read ILSIVLTGFGLAMDAFAVSVA, ALKVALFFGGFQALMPLIGWG, AFDHWIAFILLGFIGGKMIFE, LAIATSIDALAVGVSFAFLGI, IVQTIIIIGIITFVLCFLGVI, and IVGGVILILIGINILLEHTGI.

It belongs to the MntP (TC 9.B.29) family.

The protein resides in the cell membrane. Probably functions as a manganese efflux pump. The polypeptide is Putative manganese efflux pump MntP (Clostridium perfringens (strain SM101 / Type A)).